Consider the following 89-residue polypeptide: Small ribosomal subunit protein uS19 (89 aa).

The protein belongs to the universal ribosomal protein uS19 family.

Protein S19 forms a complex with S13 that binds strongly to the 16S ribosomal RNA. This Xanthomonas axonopodis pv. citri (strain 306) protein is Small ribosomal subunit protein uS19.